A 267-amino-acid polypeptide reads, in one-letter code: Fibroin light chain (267 aa).

An N-terminal signal peptide occupies residues 1–16 (MLPFVLVLLVATSALA). Ser19 is subject to N-acetylserine; in short form. An intrachain disulfide couples Cys103 to Cys162.

Silk fibroin elementary unit consists in a disulfide-linked heavy and light chain and a p25 glycoprotein in molar ratios of 6:6:1. This results in a complex of approximately 2.3 MDa. Post-translationally, partially N-terminally processed to yield a short form which lacks the first two residues of the long form. The interchain disulfide bridge is essential for the intracellular transport and secretion of fibroin. As to expression, produced exclusively in the posterior (PSG) section of silk glands, which are essentially modified salivary glands.

The protein resides in the secreted. It is likely that the major role of L-chain is to prevent the retention of H-chain in ER by forming the disulfide linkage. The protein is Fibroin light chain (FIBL) of Galleria mellonella (Greater wax moth).